A 308-amino-acid chain; its full sequence is Ornithine carbamoyltransferase (308 aa).

Residues 56–59, Gln-83, Arg-107, and 134–137 contribute to the carbamoyl phosphate site; these read STRT and HPCQ. L-ornithine-binding positions include Asn-165, Asp-225, and 229–230; that span reads SM. Residues 266–267 and Arg-294 contribute to the carbamoyl phosphate site; that span reads CL.

It belongs to the aspartate/ornithine carbamoyltransferase superfamily. OTCase family.

The protein resides in the cytoplasm. The enzyme catalyses carbamoyl phosphate + L-ornithine = L-citrulline + phosphate + H(+). Its pathway is amino-acid biosynthesis; L-arginine biosynthesis; L-arginine from L-ornithine and carbamoyl phosphate: step 1/3. Its function is as follows. Reversibly catalyzes the transfer of the carbamoyl group from carbamoyl phosphate (CP) to the N(epsilon) atom of ornithine (ORN) to produce L-citrulline. This Paracoccus denitrificans (strain Pd 1222) protein is Ornithine carbamoyltransferase.